The primary structure comprises 357 residues: Putative ABC transporter ATP-binding protein MG303 (357 aa).

The 241-residue stretch at 72-312 (LFFNNISVFV…TSWLMQYGIT (241 aa)) folds into the ABC transporter domain. 107-114 (GESGSGKT) provides a ligand contact to ATP.

The protein belongs to the ABC transporter superfamily.

The sequence is that of Putative ABC transporter ATP-binding protein MG303 from Mycoplasma genitalium (strain ATCC 33530 / DSM 19775 / NCTC 10195 / G37) (Mycoplasmoides genitalium).